A 125-amino-acid chain; its full sequence is Ribosome-binding factor A (125 aa).

The protein belongs to the RbfA family. In terms of assembly, monomer. Binds 30S ribosomal subunits, but not 50S ribosomal subunits or 70S ribosomes.

It is found in the cytoplasm. In terms of biological role, one of several proteins that assist in the late maturation steps of the functional core of the 30S ribosomal subunit. Associates with free 30S ribosomal subunits (but not with 30S subunits that are part of 70S ribosomes or polysomes). Required for efficient processing of 16S rRNA. May interact with the 5'-terminal helix region of 16S rRNA. This Xylella fastidiosa (strain M23) protein is Ribosome-binding factor A.